Consider the following 346-residue polypeptide: Alkanal monooxygenase alpha chain (346 aa).

Heterodimer of an alpha and a beta chain.

It carries out the reaction a long-chain fatty aldehyde + FMNH2 + O2 = a long-chain fatty acid + hnu + FMN + H2O + 2 H(+). In terms of biological role, light-emitting reaction in luminous bacteria. The chain is Alkanal monooxygenase alpha chain (luxA) from Photobacterium phosphoreum.